The following is a 333-amino-acid chain: HTH-type transcriptional repressor PurR (333 aa).

One can recognise an HTH lacI-type domain in the interval 2–56 (ATIKDVAKLASVSTTTVSHVINKTRFVAEATQKRVWEAVEELNYAPSAVARSLKC). The segment at residues 4–23 (IKDVAKLASVSTTTVSHVIN) is a DNA-binding region (H-T-H motif). The DNA-binding element occupies 48–56 (SAVARSLKC). Residues Phe-73, Lys-189, Thr-191, Phe-220, and Asp-274 each coordinate hypoxanthine.

In terms of assembly, homodimer.

It participates in purine metabolism; purine nucleotide biosynthesis [regulation]. Its function is as follows. Is the main repressor of the genes involved in the de novo synthesis of purine nucleotides, regulating purB, purC, purEK, purF, purHD, purL, purMN and guaBA expression. PurR is allosterically activated to bind its cognate DNA by binding the purine corepressors, hypoxanthine or guanine, thereby effecting transcription repression. In Aliivibrio salmonicida (strain LFI1238) (Vibrio salmonicida (strain LFI1238)), this protein is HTH-type transcriptional repressor PurR.